We begin with the raw amino-acid sequence, 486 residues long: Surface lipoprotein assembly modifier (486 aa).

The N-terminal stretch at 1 to 29 (MKNGVKQISFLSLIGLSLIGLSLTNIAWA) is a signal peptide. The N-terminal domain stretch occupies residues 30 to 197 (KVARPKNDTL…QYLLTLNQRN (168 aa)). The tract at residues 198-486 (QWIWQVGLNF…RIYLEIGKIF (289 aa)) is C-terminal probable beta barrel. The next 14 beta stranded transmembrane spans lie at 199 to 209 (WIWQVGLNFLN), 237 to 248 (GRVFFISRKKWP), 253 to 262 (FFSKTMFNGN), 276 to 286 (TLRIGGGLGYQ), 290 to 300 (VEVSLFPFQEK), 320 to 330 (LGIRLENVDWL), 334 to 344 (WQISTALEYGE), 358 to 367 (YFISSTLFYL), 373 to 382 (FWFVGMDFHR), 395 to 404 (KTLRLGWGQD), 409 to 419 (ISSRLTFSYAN), 437 to 446 (YATTITLWHR), 453 to 463 (LTPKLSWDYQK), and 476 to 486 (NRIYLEIGKIF).

It belongs to the Slam family.

The protein localises to the cell outer membrane. Functionally, required for correct export to the cell surface of some cell outer membrane lipoproteins (tested with TpbP) upon heterologous expression in E.coli and probably also in Haemophilus. This is Surface lipoprotein assembly modifier from Haemophilus influenzae (strain 86-028NP).